We begin with the raw amino-acid sequence, 138 residues long: Small ribosomal subunit protein uS8c (138 aa).

It belongs to the universal ribosomal protein uS8 family. In terms of assembly, part of the 30S ribosomal subunit.

It is found in the plastid. It localises to the chloroplast. One of the primary rRNA binding proteins, it binds directly to 16S rRNA central domain where it helps coordinate assembly of the platform of the 30S subunit. The chain is Small ribosomal subunit protein uS8c (rps8) from Oenothera elata subsp. hookeri (Hooker's evening primrose).